A 351-amino-acid polypeptide reads, in one-letter code: MFDLLGLRLLHYITFRTAYATIFAFLLALIFGPFIILRLKKLKLDQILREDGPKRHLSEKMGIPTMGGILIFFCVLVSLFFWINLWNVYFLIVLFVMISFACLGFMDDLLKIKRKNADGLNPRFKIYGQILFSCISVTMLYYFGGEHISIIYFPFFKSLKLDLGVLYIPFGMFILISASNSFNLTDGLDGLAIGLSIVVTGALVIIAYLTSRVDFATYLNIPNIKGSEELVIFLGALLGGSFGFLWFNAYPAKIMMGDTGSLSIGAVLGMTALILKSEILFAILAGVFVLETLSVIIQVAVYKKTKKRVFKMAPLHHHFEELGWSETQVVIRFWIIGLIFAIIALSTLKIR.

The next 10 membrane-spanning stretches (helical) occupy residues 17-37 (TAYATIFAFLLALIFGPFIIL), 63-83 (IPTMGGILIFFCVLVSLFFWI), 85-105 (LWNVYFLIVLFVMISFACLGF), 135-155 (ISVTMLYYFGGEHISIIYFPF), 158-178 (SLKLDLGVLYIPFGMFILISA), 190-210 (GLAIGLSIVVTGALVIIAYLT), 230-250 (LVIFLGALLGGSFGFLWFNAY), 254-274 (IMMGDTGSLSIGAVLGMTALI), 279-299 (ILFAILAGVFVLETLSVIIQV), and 328-348 (QVVIRFWIIGLIFAIIALSTL).

Belongs to the glycosyltransferase 4 family. MraY subfamily. It depends on Mg(2+) as a cofactor.

The protein localises to the cell inner membrane. The enzyme catalyses UDP-N-acetyl-alpha-D-muramoyl-L-alanyl-gamma-D-glutamyl-meso-2,6-diaminopimeloyl-D-alanyl-D-alanine + di-trans,octa-cis-undecaprenyl phosphate = di-trans,octa-cis-undecaprenyl diphospho-N-acetyl-alpha-D-muramoyl-L-alanyl-D-glutamyl-meso-2,6-diaminopimeloyl-D-alanyl-D-alanine + UMP. It functions in the pathway cell wall biogenesis; peptidoglycan biosynthesis. In terms of biological role, catalyzes the initial step of the lipid cycle reactions in the biosynthesis of the cell wall peptidoglycan: transfers peptidoglycan precursor phospho-MurNAc-pentapeptide from UDP-MurNAc-pentapeptide onto the lipid carrier undecaprenyl phosphate, yielding undecaprenyl-pyrophosphoryl-MurNAc-pentapeptide, known as lipid I. The sequence is that of Phospho-N-acetylmuramoyl-pentapeptide-transferase from Borrelia hermsii (strain HS1 / DAH).